The chain runs to 72 residues: Toxin Acra II-3 (72 aa).

One can recognise an LCN-type CS-alpha/beta domain in the interval 4-67 (PGNYPLDTRG…VWNAAKNYCK (64 aa)). Disulfide bonds link cysteine 18/cysteine 41, cysteine 27/cysteine 46, and cysteine 31/cysteine 48.

The protein belongs to the long (3 C-C) scorpion toxin superfamily. Sodium channel inhibitor family. Beta subfamily. As to expression, expressed by the venom gland.

It is found in the secreted. Its function is as follows. Binds to sodium channels (Nav) and affects the channel activation process. The chain is Toxin Acra II-3 from Androctonus crassicauda (Arabian fat-tailed scorpion).